The chain runs to 486 residues: Glutamyl-tRNA(Gln) amidotransferase subunit A (486 aa).

Catalysis depends on charge relay system residues Lys79 and Ser154. Ser178 serves as the catalytic Acyl-ester intermediate.

Belongs to the amidase family. GatA subfamily. As to quaternary structure, heterotrimer of A, B and C subunits.

The catalysed reaction is L-glutamyl-tRNA(Gln) + L-glutamine + ATP + H2O = L-glutaminyl-tRNA(Gln) + L-glutamate + ADP + phosphate + H(+). Allows the formation of correctly charged Gln-tRNA(Gln) through the transamidation of misacylated Glu-tRNA(Gln) in organisms which lack glutaminyl-tRNA synthetase. The reaction takes place in the presence of glutamine and ATP through an activated gamma-phospho-Glu-tRNA(Gln). This Dehalococcoides mccartyi (strain ATCC BAA-2100 / JCM 16839 / KCTC 5957 / BAV1) protein is Glutamyl-tRNA(Gln) amidotransferase subunit A.